Reading from the N-terminus, the 507-residue chain is ATP synthase subunit alpha, chloroplastic (507 aa).

170 to 177 provides a ligand contact to ATP; that stretch reads GDRQTGKT.

Belongs to the ATPase alpha/beta chains family. F-type ATPases have 2 components, CF(1) - the catalytic core - and CF(0) - the membrane proton channel. CF(1) has five subunits: alpha(3), beta(3), gamma(1), delta(1), epsilon(1). CF(0) has four main subunits: a, b, b' and c.

The protein resides in the plastid. It localises to the chloroplast thylakoid membrane. The enzyme catalyses ATP + H2O + 4 H(+)(in) = ADP + phosphate + 5 H(+)(out). Its function is as follows. Produces ATP from ADP in the presence of a proton gradient across the membrane. The alpha chain is a regulatory subunit. The protein is ATP synthase subunit alpha, chloroplastic of Lemna minor (Common duckweed).